Here is a 953-residue protein sequence, read N- to C-terminus: TPR repeat-containing protein ZIP4 (953 aa).

Residues Ala-129–Ala-162 form a TPR 1 repeat. Residues Ala-248–Pro-269 are disordered. 2 TPR repeats span residues His-432–Asp-465 and Ala-473–Ile-506. Residues Arg-924 to Val-953 are disordered. Over residues Ile-943 to Val-953 the composition is skewed to polar residues.

It is found in the nucleus. It localises to the chromosome. Functionally, required for crossover formation, complete synapsis of homologous chromosomes and bivalent formation during meiosis. Is specific to recombination events resulting in interference-sensitive crossovers (class I meiotic crossover) and works cooperatively with MER3 to promote crossovers. The protein is TPR repeat-containing protein ZIP4 of Oryza sativa subsp. indica (Rice).